Here is a 1382-residue protein sequence, read N- to C-terminus: DNA-directed RNA polymerase subunit beta (1382 aa).

Belongs to the RNA polymerase beta chain family. In terms of assembly, the RNAP catalytic core consists of 2 alpha, 1 beta, 1 beta' and 1 omega subunit. When a sigma factor is associated with the core the holoenzyme is formed, which can initiate transcription.

It catalyses the reaction RNA(n) + a ribonucleoside 5'-triphosphate = RNA(n+1) + diphosphate. Functionally, DNA-dependent RNA polymerase catalyzes the transcription of DNA into RNA using the four ribonucleoside triphosphates as substrates. The polypeptide is DNA-directed RNA polymerase subunit beta (Aliarcobacter butzleri (strain RM4018) (Arcobacter butzleri)).